Consider the following 361-residue polypeptide: Phospho-N-acetylmuramoyl-pentapeptide-transferase (361 aa).

Helical transmembrane passes span 25–45 (RAVLASLTALGIGLALGPWVI), 73–93 (TMGGTLILLSIGITTLLWADL), 97–117 (YVWLLLAVLFGTGAIGFYDDW), 134–154 (MFWQSAIAIFAGIYLISTASL), 168–188 (VIYPFGVVGFCILTYFVIVGT), 200–220 (GLAAMPVVMVSAALAVFAYVA), 240–260 (VAVFCAAMAGACLAFLWFNAY), 264–284 (VFMGDVGALALGAALGTVAVI), 289–309 (IVLFVMGGLFVMEALSVMIQV), and 338–358 (QVVVRFWIITMMLVLAGLSTL).

Belongs to the glycosyltransferase 4 family. MraY subfamily. Mg(2+) is required as a cofactor.

It is found in the cell inner membrane. The catalysed reaction is UDP-N-acetyl-alpha-D-muramoyl-L-alanyl-gamma-D-glutamyl-meso-2,6-diaminopimeloyl-D-alanyl-D-alanine + di-trans,octa-cis-undecaprenyl phosphate = di-trans,octa-cis-undecaprenyl diphospho-N-acetyl-alpha-D-muramoyl-L-alanyl-D-glutamyl-meso-2,6-diaminopimeloyl-D-alanyl-D-alanine + UMP. It participates in cell wall biogenesis; peptidoglycan biosynthesis. In terms of biological role, catalyzes the initial step of the lipid cycle reactions in the biosynthesis of the cell wall peptidoglycan: transfers peptidoglycan precursor phospho-MurNAc-pentapeptide from UDP-MurNAc-pentapeptide onto the lipid carrier undecaprenyl phosphate, yielding undecaprenyl-pyrophosphoryl-MurNAc-pentapeptide, known as lipid I. The sequence is that of Phospho-N-acetylmuramoyl-pentapeptide-transferase from Laribacter hongkongensis (strain HLHK9).